The chain runs to 417 residues: Cysteate synthase (417 aa).

An N6-(pyridoxal phosphate)lysine modification is found at lysine 104. Pyridoxal 5'-phosphate-binding residues include asparagine 131 and threonine 371.

This sequence belongs to the threonine synthase family. Cysteate synthase subfamily. As to quaternary structure, homotrimer. Pyridoxal 5'-phosphate is required as a cofactor.

It carries out the reaction O-phospho-L-serine + sulfite + H(+) = L-cysteate + phosphate. Its pathway is cofactor biosynthesis; coenzyme M biosynthesis. Its function is as follows. Specifically catalyzes the beta-elimination of phosphate from L-phosphoserine and the beta-addition of sulfite to the dehydroalanine intermediate to produce L-cysteate. In Methanococcoides burtonii (strain DSM 6242 / NBRC 107633 / OCM 468 / ACE-M), this protein is Cysteate synthase.